Here is a 30-residue protein sequence, read N- to C-terminus: Glucagon-like peptide (30 aa).

Arginine amide is present on Arg-30.

It belongs to the glucagon family.

The protein resides in the secreted. This chain is Glucagon-like peptide, found in Anguilla anguilla (European freshwater eel).